A 204-amino-acid polypeptide reads, in one-letter code: uncharacterized protein (204 aa).

Residues 1-10 (MQQAITQQEK) show a composition bias toward polar residues. Disordered regions lie at residues 1–20 (MQQAITQQEKAQPKSVLPNR) and 70–99 (DEARKLAEQQRIEDATRTQSKTTEDMKNTE). One can recognise an SPOR domain in the interval 131 to 204 (VRDSKKFGLQ…TVTDCVVIGM (74 aa)).

The protein to E.coli FtsN repeat regions.

This is an uncharacterized protein from Haemophilus influenzae (strain ATCC 51907 / DSM 11121 / KW20 / Rd).